The chain runs to 262 residues: Thiazole synthase (262 aa).

The active-site Schiff-base intermediate with DXP is the Lys97. 1-deoxy-D-xylulose 5-phosphate is bound by residues Gly158, 185-186 (AG), and 207-208 (NT).

It belongs to the ThiG family. Homotetramer. Forms heterodimers with either ThiH or ThiS.

It is found in the cytoplasm. It carries out the reaction [ThiS sulfur-carrier protein]-C-terminal-Gly-aminoethanethioate + 2-iminoacetate + 1-deoxy-D-xylulose 5-phosphate = [ThiS sulfur-carrier protein]-C-terminal Gly-Gly + 2-[(2R,5Z)-2-carboxy-4-methylthiazol-5(2H)-ylidene]ethyl phosphate + 2 H2O + H(+). It participates in cofactor biosynthesis; thiamine diphosphate biosynthesis. Catalyzes the rearrangement of 1-deoxy-D-xylulose 5-phosphate (DXP) to produce the thiazole phosphate moiety of thiamine. Sulfur is provided by the thiocarboxylate moiety of the carrier protein ThiS. In vitro, sulfur can be provided by H(2)S. This Neisseria gonorrhoeae (strain ATCC 700825 / FA 1090) protein is Thiazole synthase.